A 250-amino-acid polypeptide reads, in one-letter code: MTTEVILHYRPCESDPTQLPKIAEKAIQDFPTRPLSRFIPWFPYDGSKLPLRPKRSPPVISEEAAEDVKQYLTISEHDAKSHSYDCTVDLLEFQPSLKKQHLTWSHTLKEQTNSGNLGKQSEKGKQHKRRSWSISLPSNNCTKNVSPLSKKLQDSLKALNLHSLYRARWTIEHTICNSQTLEDIWTKLNQIIRHNELPSCNATIQRHLGQIWVFCDIMYCEYVGSLLKGRLALTGKINLFVHKYGVIFSM.

A sufficient for interaction with MAD2L2 region spans residues 28–83; that stretch reads QDFPTRPLSRFIPWFPYDGSKLPLRPKRSPPVISEEAAEDVKQYLTISEHDAKSHS. Positions 108-119 are enriched in polar residues; the sequence is LKEQTNSGNLGK. The disordered stretch occupies residues 108–129; sequence LKEQTNSGNLGKQSEKGKQHKR.

Component of the shieldin complex, consisting of SHLD1, SHLD2, SHLD3 and MAD2L2/REV7. Within the complex, SHLD2 forms a scaffold which interacts with a SHLD3-MAD2L2 subcomplex via its N-terminus, and with SHLD1 via its C-terminus. Interacts with ASTE1.

It is found in the chromosome. Functionally, component of the shieldin complex, which plays an important role in repair of DNA double-stranded breaks (DSBs). During G1 and S phase of the cell cycle, the complex functions downstream of TP53BP1 to promote non-homologous end joining (NHEJ) and suppress DNA end resection. Mediates various NHEJ-dependent processes including immunoglobulin class-switch recombination, and fusion of unprotected telomeres. In Homo sapiens (Human), this protein is Shieldin complex subunit 3.